A 1687-amino-acid chain; its full sequence is PH domain leucine-rich repeat-containing protein phosphatase 1 (1687 aa).

An N-acetylmethionine modification is found at Met1. 2 disordered regions span residues Met1 to Ala96 and Ala230 to Asp406. Residues Ala78–Ala96 are compositionally biased toward low complexity. Ser286 carries the phosphoserine modification. The span at Asp314–Ser326 shows a compositional bias: polar residues. Ser372 is subject to Phosphoserine. The PH domain maps to Arg492 to Ser592. 21 LRR repeats span residues Arg594–Ser615, Asp617–Arg638, Lys648–Ile669, Thr671–Met692, Asn694–Met715, Gln717–Thr739, Ala740–Arg760, His764–Phe785, His788–Asn809, Phe829–Asn850, Tyr851–Ser872, Lys874–Asn895, Ser897–Thr918, Ser919–Lys940, Ser943–Glu964, Ile969–Thr989, Arg993–Lys1014, Glu1017–Cys1038, Arg1040–Pro1061, Glu1062–Pro1083, and Lys1085–Leu1106. A PPM-type phosphatase domain is found at Ser1131 to Leu1378. Mn(2+)-binding residues include Asp1166, Gly1167, Lys1330, and Asp1369. Disordered regions lie at residues Asp1414–Ala1465 and Pro1604–Leu1687. Positions Ser1424–Glu1445 are enriched in low complexity. Pro residues predominate over residues Leu1649–Gln1669. The PDZ-binding signature appears at Thr1685–Leu1687.

In terms of assembly, interacts with the nucleotide free form of K-Ras (KRAS) via its LRR repeats. Interacts with AKT2, AKT3 and PRKCB. Interacts with WDR48 and USP12. The cofactor is Mn(2+). In terms of tissue distribution, isoforms 1 and 2 are expressed in the retina.

The protein resides in the cytoplasm. The protein localises to the membrane. It localises to the nucleus. It carries out the reaction O-phospho-L-seryl-[protein] + H2O = L-seryl-[protein] + phosphate. It catalyses the reaction O-phospho-L-threonyl-[protein] + H2O = L-threonyl-[protein] + phosphate. Its activity is regulated as follows. Insensitive to okadaic acid. Deubiquitination by WDR48-USP12 complex positively regulates PHLPP1 stability. Protein phosphatase involved in regulation of Akt and PKC signaling. Mediates dephosphorylation in the C-terminal domain hydrophobic motif of members of the AGC Ser/Thr protein kinase family; specifically acts on 'Ser-473' of AKT2 and AKT3, 'Ser-660' of PRKCB and 'Ser-657' of PRKCA. Isoform 2 seems to have a major role in regulating Akt signaling in hippocampal neurons. Akt regulates the balance between cell survival and apoptosis through a cascade that primarily alters the function of transcription factors that regulate pro- and antiapoptotic genes. Dephosphorylation of 'Ser-473' of Akt triggers apoptosis and suppression of tumor growth. Dephosphorylation of PRKCA and PRKCB leads to their destabilization and degradation. Dephosphorylates STK4 on 'Thr-387' leading to STK4 activation and apoptosis. Dephosphorylates RPS6KB1 and is involved in regulation of cap-dependent translation. Inhibits cancer cell proliferation and may act as a tumor suppressor. Dephosphorylates RAF1 inhibiting its kinase activity. May act as a negative regulator of K-Ras signaling in membrane rafts. Involved in the hippocampus-dependent long-term memory formation. Involved in circadian control by regulating the consolidation of circadian periodicity after resetting. Involved in development and function of regulatory T-cells. The sequence is that of PH domain leucine-rich repeat-containing protein phosphatase 1 (Phlpp1) from Mus musculus (Mouse).